The following is a 520-amino-acid chain: Keratin, type II cytoskeletal 8 (520 aa).

A compositionally biased stretch (low complexity) spans 1-19; the sequence is MSTYSKKTSYTVKSSSSGS. The disordered stretch occupies residues 1–20; the sequence is MSTYSKKTSYTVKSSSSGSI. A head region spans residues 2 to 114; that stretch reads STYSKKTSYT…DPNIQIVRTQ (113 aa). Ser28 carries the post-translational modification Phosphoserine. A coil 1A region spans residues 115–150; it reads EKEQIKTLNNRFASFIDKVRFLEQQNKMLETKWSLL. Residues 115–426 form the IF rod domain; that stretch reads EKEQIKTLNN…KLLEGEEDRL (312 aa). Residues 151–166 are linker 1; sequence QNQTATRSNIDAMFEA. Residues 168-259 form a coil 1B region; the sequence is IANLRRQLDS…QIFEEEIREL (92 aa). Residues 260 to 283 form a linker 12 region; it reads QSQIKDTSVVVEMDNSRNLDMDAI. Residues 284 to 422 form a coil 2 region; it reads VAEVRAQYED…ATYRKLLEGE (139 aa). The interval 423 to 520 is tail; it reads EDRLATGIKA…VSESSEVVQD (98 aa).

It belongs to the intermediate filament family. Heterotetramer of two type I and two type II keratins. Keratin-8 associates with keratin-18. As to expression, expressed in simple epithelia.

It localises to the cytoplasm. It is found in the nucleus. Its subcellular location is the nucleoplasm. The protein localises to the nucleus matrix. In terms of biological role, together with KRT19, helps to link the contractile apparatus to dystrophin at the costameres of striated muscle. The sequence is that of Keratin, type II cytoskeletal 8 from Danio rerio (Zebrafish).